The primary structure comprises 139 residues: D-ribose pyranase (139 aa).

Residue H20 is the Proton donor of the active site. Residues D28, H106, and 128–130 (YAN) each bind substrate.

The protein belongs to the RbsD / FucU family. RbsD subfamily. In terms of assembly, homodecamer.

It localises to the cytoplasm. The enzyme catalyses beta-D-ribopyranose = beta-D-ribofuranose. Its pathway is carbohydrate metabolism; D-ribose degradation; D-ribose 5-phosphate from beta-D-ribopyranose: step 1/2. In terms of biological role, catalyzes the interconversion of beta-pyran and beta-furan forms of D-ribose. The polypeptide is D-ribose pyranase (Escherichia coli (strain 55989 / EAEC)).